A 173-amino-acid polypeptide reads, in one-letter code: Archaemetzincin (173 aa).

A Zn(2+)-binding site is contributed by H130. The Proton acceptor role is filled by E131. 6 residues coordinate Zn(2+): H134, H140, C141, C146, C165, and C168.

Belongs to the peptidase M54 family. In terms of assembly, monomer. Requires Zn(2+) as cofactor.

Its function is as follows. Probable zinc metalloprotease whose natural substrate is unknown. The polypeptide is Archaemetzincin (Haloquadratum walsbyi (strain DSM 16790 / HBSQ001)).